The following is a 437-amino-acid chain: MSAPRVSFVSLGCPKALVDSERIITGLRSEGYEISRKHDGADLVIVNTCGFLDSARDESLEAIGLALNENGKVIVTGCLGAEPDVIRERHPNVLAITGPQAYESVMNAVHEVAPPAHDPFVDLVPPQGVKLTPRHYAYLKISEGCSNRCSFCIIPALRGDLVSRPINEVLREAEKLVQAGVKEILVISQDTSAYGLDIKYQEAMWQDRTVRTKFLDLSRELGEMGVWVRMHYVYPYPHVDEVIPLMAEGKILPYLDIPFQHASPAVLKNMRRPAHQEKTSRRIQAWRETCPDLAVRSTFIVGYPGETEEDFQMLLDWLDEAKIERAGCFKYEAVKGAKANDLGLEQVPEEVKEARWHRFMAKQQQISTNLLKKKVGKRLPVIIDEANGTIGKGRTRYDAPEIDGSVHISSRRPLRVGDIVTVKIEASDAYDLHGTAV.

The MTTase N-terminal domain maps to 4–114 (PRVSFVSLGC…VMNAVHEVAP (111 aa)). Positions 13, 49, 78, 145, 149, and 152 each coordinate [4Fe-4S] cluster. The 239-residue stretch at 131–369 (LTPRHYAYLK…MAKQQQISTN (239 aa)) folds into the Radical SAM core domain. A TRAM domain is found at 372-437 (KKKVGKRLPV…DAYDLHGTAV (66 aa)).

This sequence belongs to the methylthiotransferase family. RimO subfamily. [4Fe-4S] cluster is required as a cofactor.

The protein resides in the cytoplasm. It carries out the reaction L-aspartate(89)-[ribosomal protein uS12]-hydrogen + (sulfur carrier)-SH + AH2 + 2 S-adenosyl-L-methionine = 3-methylsulfanyl-L-aspartate(89)-[ribosomal protein uS12]-hydrogen + (sulfur carrier)-H + 5'-deoxyadenosine + L-methionine + A + S-adenosyl-L-homocysteine + 2 H(+). Catalyzes the methylthiolation of an aspartic acid residue of ribosomal protein uS12. This chain is Ribosomal protein uS12 methylthiotransferase RimO, found in Brucella abortus (strain S19).